Consider the following 374-residue polypeptide: Fasciclin-like arabinogalactan protein CTB11 (374 aa).

Positions 1 to 18 (MHFPALAVAGCLLSRATA) are cleaved as a signal peptide. 2 consecutive FAS1 domains span residues 19–171 (QSLD…DANM) and 173–302 (LPHN…DGAL). Residues Asn-52, Asn-72, Asn-120, Asn-132, and Asn-176 are each glycosylated (N-linked (GlcNAc...) asparagine). The helical transmembrane segment at 328–348 (ILASHQLTLLAVLAMALVSIL) threads the bilayer.

Belongs to the fasciclin-like AGP family.

The protein resides in the membrane. Its pathway is mycotoxin biosynthesis. Fasciclin-like arabinogalactan protein; part of the gene cluster that mediates the biosynthesis of cercosporin, a light-activated, non-host-selective toxin. The perylenequinone chromophore of cercosporin absorbs light energy to attain an electronically-activated triplet state and produces active oxygen species such as the hydroxyl radical, superoxide, hydrogen peroxide or singlet oxygen upon reaction with oxygen molecules. These reactive oxygen species cause damage to various cellular components including lipids, proteins and nucleic acids. The first step of cercosporin biosynthesis is performed by the polyketide synthase CTB1 which catalyzes the formation of nor-toralactone. The starter unit acyltransferase (SAT) domain of CTB1 initiates polyketide extension by the selective utilization of acetyl-CoA, which is elongated to the heptaketide in the beta-ketoacyl synthase (KS) domain by successive condensations with six malonyl units introduced by the malonyl acyltransferase (MAT) domain. The product template (PT) domain catalyzes C4-C9 and C2-C11 aldol cyclizations and dehydrations to a trihydroxynaphthalene, which is thought to be delivered to the thioesterase (TE) domain for product release. The bifunctional enzyme CTB3 then methylates nor-toralactone to toralactone before conducting an unusual oxidative aromatic ring opening. The O-methyltransferase CTB2 further methylates the nascent OH-6 of the CBT3 product, blocking further oxidation at this site before the reductase CTB6 reduces the 2-oxopropyl ketone at position C7, giving naphthalene. The FAD-dependent monooxygenase CTB5 in concert with the multicopper oxidase CTB12 are responsible for homodimerization of naphthalene with CTB7 installing the dioxepine moiety, finally producing cercosporin. The fasciclin domain-containing protein CTB11 might act with CTB5 and CTB12 whereas the roles of CTB9 and CTB10 have still to be elucidated. In Cercospora beticola (Sugarbeet leaf spot fungus), this protein is Fasciclin-like arabinogalactan protein CTB11.